The chain runs to 496 residues: GTPase Der (496 aa).

2 consecutive EngA-type G domains span residues 3-166 (PVVA…FDNL) and 208-381 (IKLA…RSAT). GTP-binding positions include 9–16 (GRPNVGKS), 56–60 (DTGGI), 118–121 (NKVD), 214–221 (GRPNVGKS), 261–265 (DTAGV), and 326–329 (NKWD). A KH-like domain is found at 382–466 (TRVGTSVLTR…PIRIQFQNSD (85 aa)).

It belongs to the TRAFAC class TrmE-Era-EngA-EngB-Septin-like GTPase superfamily. EngA (Der) GTPase family. In terms of assembly, associates with the 50S ribosomal subunit.

GTPase that plays an essential role in the late steps of ribosome biogenesis. In Vibrio vulnificus (strain YJ016), this protein is GTPase Der.